The sequence spans 243 residues: tRNA (guanine-N(1)-)-methyltransferase (243 aa).

S-adenosyl-L-methionine-binding positions include Gly108 and Leu127 to Leu132.

This sequence belongs to the RNA methyltransferase TrmD family. Homodimer.

It is found in the cytoplasm. The enzyme catalyses guanosine(37) in tRNA + S-adenosyl-L-methionine = N(1)-methylguanosine(37) in tRNA + S-adenosyl-L-homocysteine + H(+). Specifically methylates guanosine-37 in various tRNAs. The polypeptide is tRNA (guanine-N(1)-)-methyltransferase (Streptococcus equi subsp. equi (strain 4047)).